The sequence spans 420 residues: Ribosome biogenesis protein WDR12 homolog (420 aa).

Residues 10–92 (VQVHLKTKQE…EDAIEIEYVE (83 aa)) form a ubiquitin-like (UBL) domain region. WD repeat units follow at residues 104–142 (LHDDWVSAVKARGKWILSGCYDNSLNLWTNKGKHILTIS), 143–185 (GHTA…NAVD), 192–231 (GHERGVDSVSVSPDGLRFATGSWDTMLKVWSAELDDGVEG), 250–288 (GHRESVSAVQWMDATTLLTGSWDYTLKVWDLSLEGIKTE), 290–329 (STNKSIFDASYSKLNRLILTASADKNLRLYDPRTNQGSVV), 335–375 (GHNA…APLY), and 379–417 (GHGDKVLDIDWSNPKYIVSGGVDNSVRVFKSRKALAEDT).

The protein belongs to the WD repeat WDR12/YTM1 family.

Its subcellular location is the nucleus. The protein resides in the nucleolus. The protein localises to the nucleoplasm. Functionally, required for maturation of ribosomal RNAs and formation of the large ribosomal subunit. The chain is Ribosome biogenesis protein WDR12 homolog from Drosophila simulans (Fruit fly).